Consider the following 1385-residue polypeptide: Probable serine/threonine-protein kinase DDB_G0268876 (1385 aa).

A Protein kinase domain is found at 758–1008 (LELTKEIGRG…QQIITYLENL (251 aa)). Residues 764–772 (IGRGVSGVV) and K785 each bind ATP. Residue D878 is the Proton acceptor of the active site. Disordered regions lie at residues 1040 to 1074 (GGNS…ENKI), 1091 to 1266 (EVSK…SVGG), and 1287 to 1339 (ISSS…NNNN). A compositionally biased stretch (polar residues) spans 1055–1073 (VSGSNNNESSTAVSLNENK). Residues 1107–1144 (SSSTSSSPSTLSAPQSPVGSTSPMGSTSTSPISNNNNR) are compositionally biased toward low complexity. Positions 1145–1162 (PTHDHQQPHQVKWERIVP) are enriched in basic and acidic residues. Low complexity-rich tracts occupy residues 1189 to 1232 (NNNN…SSGI), 1242 to 1266 (FLSS…SVGG), and 1295 to 1339 (NNNN…NNNN).

Belongs to the protein kinase superfamily. TKL Ser/Thr protein kinase family.

The catalysed reaction is L-seryl-[protein] + ATP = O-phospho-L-seryl-[protein] + ADP + H(+). It catalyses the reaction L-threonyl-[protein] + ATP = O-phospho-L-threonyl-[protein] + ADP + H(+). This is Probable serine/threonine-protein kinase DDB_G0268876 from Dictyostelium discoideum (Social amoeba).